The following is a 192-amino-acid chain: GTP cyclohydrolase 1 (192 aa).

Residues Cys-81, His-84, and Cys-153 each coordinate Zn(2+).

Belongs to the GTP cyclohydrolase I family. In terms of assembly, toroid-shaped homodecamer, composed of two pentamers of five dimers.

The enzyme catalyses GTP + H2O = 7,8-dihydroneopterin 3'-triphosphate + formate + H(+). It functions in the pathway cofactor biosynthesis; 7,8-dihydroneopterin triphosphate biosynthesis; 7,8-dihydroneopterin triphosphate from GTP: step 1/1. This Streptococcus mutans serotype c (strain ATCC 700610 / UA159) protein is GTP cyclohydrolase 1.